The following is a 140-amino-acid chain: Early nodulin-like protein 22 (140 aa).

A signal peptide spans 1 to 28 (MAQSSGHVSYVAVTVPIAIVMTVLCLFL). One can recognise a Phytocyanin domain in the interval 39 to 138 (TTYIVGGDDG…GLKMAIKALA (100 aa)). Asn85 is a glycosylation site (N-linked (GlcNAc...) asparagine). Cys92 and Cys126 are oxidised to a cystine.

This sequence belongs to the early nodulin-like (ENODL) family.

Functionally, may act as a carbohydrate transporter. The polypeptide is Early nodulin-like protein 22 (Arabidopsis thaliana (Mouse-ear cress)).